Consider the following 328-residue polypeptide: GMP reductase (328 aa).

The Thioimidate intermediate role is filled by cysteine 176. 205 to 228 serves as a coordination point for NADP(+); sequence IIADGGIRTHGDVAKSIRFGATMV.

It belongs to the IMPDH/GMPR family. GuaC type 2 subfamily.

It carries out the reaction IMP + NH4(+) + NADP(+) = GMP + NADPH + 2 H(+). In terms of biological role, catalyzes the irreversible NADPH-dependent deamination of GMP to IMP. It functions in the conversion of nucleobase, nucleoside and nucleotide derivatives of G to A nucleotides, and in maintaining the intracellular balance of A and G nucleotides. In Bacillus cereus (strain ATCC 14579 / DSM 31 / CCUG 7414 / JCM 2152 / NBRC 15305 / NCIMB 9373 / NCTC 2599 / NRRL B-3711), this protein is GMP reductase.